The primary structure comprises 240 residues: 5-oxoprolinase subunit B (240 aa).

An ATP-binding site is contributed by 194–201 (GWQLIGKT).

This sequence belongs to the PxpB family. Forms a complex composed of PxpA, PxpB and PxpC. Interacts with PxpC (KipA). Interaction with PxpC prevents the inhibitory action of PxpB (KipI). Interacts with KinA. Two PxpB monomers bind via their C-domains at a conserved proline in the KinA dimerization and histidine-phosphotransfer (DHp) domain.

The enzyme catalyses 5-oxo-L-proline + ATP + 2 H2O = L-glutamate + ADP + phosphate + H(+). Catalyzes the cleavage of 5-oxoproline to form L-glutamate coupled to the hydrolysis of ATP to ADP and inorganic phosphate. In addition, is a potent inhibitor of the autophosphorylation reaction of kinase A (kinA) and its reverse reaction, but does not inhibit phosphate transfer to the Spo0F response regulator once kinase A is phosphorylated. Is an inhibitor of the catalytic domain of kinase A affecting the ATP/ADP reactions and not the phosphotransferase functions of this domain. The inhibition is non-competitive with respect to ATP. The polypeptide is 5-oxoprolinase subunit B (Bacillus subtilis (strain 168)).